The primary structure comprises 549 residues: Ribosomal protein S6 kinase-like 1 (549 aa).

Residues 87-115 form the MIT domain; the sequence is IHVDPNKERREAVKLKITKYLRRAEEIFN. In terms of domain architecture, Protein kinase spans 145–539; it reads SAVEQLRGCR…VSKLKSHPFF (395 aa). ATP-binding positions include 151-159 and lysine 177; that span reads RGCRVVGVI. A disordered region spans residues 260-325; that stretch reads LTPARLPSGH…SDLPKAPGGH (66 aa). Aspartate 412 acts as the Proton acceptor in catalysis.

The protein belongs to the protein kinase superfamily. Ser/Thr protein kinase family. S6 kinase subfamily.

It carries out the reaction L-seryl-[protein] + ATP = O-phospho-L-seryl-[protein] + ADP + H(+). The catalysed reaction is L-threonyl-[protein] + ATP = O-phospho-L-threonyl-[protein] + ADP + H(+). The chain is Ribosomal protein S6 kinase-like 1 (RPS6KL1) from Pongo abelii (Sumatran orangutan).